The primary structure comprises 338 residues: Tagatose 1,6-diphosphate aldolase (338 aa).

It belongs to the aldolase LacD family.

It catalyses the reaction D-tagatofuranose 1,6-bisphosphate = D-glyceraldehyde 3-phosphate + dihydroxyacetone phosphate. Its pathway is carbohydrate metabolism; D-tagatose 6-phosphate degradation; D-glyceraldehyde 3-phosphate and glycerone phosphate from D-tagatose 6-phosphate: step 2/2. The chain is Tagatose 1,6-diphosphate aldolase from Listeria monocytogenes serotype 4b (strain CLIP80459).